A 249-amino-acid polypeptide reads, in one-letter code: Deoxyribose-phosphate aldolase (249 aa).

Residue Asp109 is the Proton donor/acceptor of the active site. The Schiff-base intermediate with acetaldehyde role is filled by Lys171. The active-site Proton donor/acceptor is the Lys200.

This sequence belongs to the DeoC/FbaB aldolase family. DeoC type 1 subfamily.

It is found in the cytoplasm. The catalysed reaction is 2-deoxy-D-ribose 5-phosphate = D-glyceraldehyde 3-phosphate + acetaldehyde. It participates in carbohydrate degradation; 2-deoxy-D-ribose 1-phosphate degradation; D-glyceraldehyde 3-phosphate and acetaldehyde from 2-deoxy-alpha-D-ribose 1-phosphate: step 2/2. Functionally, catalyzes a reversible aldol reaction between acetaldehyde and D-glyceraldehyde 3-phosphate to generate 2-deoxy-D-ribose 5-phosphate. This chain is Deoxyribose-phosphate aldolase, found in Klebsiella pneumoniae subsp. pneumoniae (strain ATCC 700721 / MGH 78578).